A 119-amino-acid polypeptide reads, in one-letter code: Methylglyoxal synthase (119 aa).

Residues M1 to I119 enclose the MGS-like domain. Residues H8, K12, T34 to T37, and S54 to G55 each bind substrate. The Proton donor/acceptor role is filled by D60. H87 is a binding site for substrate.

It belongs to the methylglyoxal synthase family.

The catalysed reaction is dihydroxyacetone phosphate = methylglyoxal + phosphate. Functionally, catalyzes the formation of methylglyoxal from dihydroxyacetone phosphate. This Clostridium perfringens (strain 13 / Type A) protein is Methylglyoxal synthase.